Consider the following 418-residue polypeptide: Bifunctional enzyme IspD/IspF (418 aa).

Positions 1 to 261 (MADTPALIPQ…EFKRASDMNF (261 aa)) are 2-C-methyl-D-erythritol 4-phosphate cytidylyltransferase. Residues 262–418 (RIGEGWDIHA…RATVLLRKFI (157 aa)) are 2-C-methyl-D-erythritol 2,4-cyclodiphosphate synthase. Positions 268 and 270 each coordinate a divalent metal cation. 4-CDP-2-C-methyl-D-erythritol 2-phosphate is bound by residues 268-270 (DIH) and 294-295 (HS). Position 302 (histidine 302) interacts with a divalent metal cation. 4-CDP-2-C-methyl-D-erythritol 2-phosphate is bound by residues 316 to 318 (DIG) and 321 to 325 (FPDTD).

This sequence in the N-terminal section; belongs to the IspD/TarI cytidylyltransferase family. IspD subfamily. In the C-terminal section; belongs to the IspF family. A divalent metal cation is required as a cofactor.

It carries out the reaction 2-C-methyl-D-erythritol 4-phosphate + CTP + H(+) = 4-CDP-2-C-methyl-D-erythritol + diphosphate. The enzyme catalyses 4-CDP-2-C-methyl-D-erythritol 2-phosphate = 2-C-methyl-D-erythritol 2,4-cyclic diphosphate + CMP. It participates in isoprenoid biosynthesis; isopentenyl diphosphate biosynthesis via DXP pathway; isopentenyl diphosphate from 1-deoxy-D-xylulose 5-phosphate: step 2/6. The protein operates within isoprenoid biosynthesis; isopentenyl diphosphate biosynthesis via DXP pathway; isopentenyl diphosphate from 1-deoxy-D-xylulose 5-phosphate: step 4/6. In terms of biological role, bifunctional enzyme that catalyzes the formation of 4-diphosphocytidyl-2-C-methyl-D-erythritol from CTP and 2-C-methyl-D-erythritol 4-phosphate (MEP) (IspD), and catalyzes the conversion of 4-diphosphocytidyl-2-C-methyl-D-erythritol 2-phosphate (CDP-ME2P) to 2-C-methyl-D-erythritol 2,4-cyclodiphosphate (ME-CPP) with a corresponding release of cytidine 5-monophosphate (CMP) (IspF). This is Bifunctional enzyme IspD/IspF from Albidiferax ferrireducens (strain ATCC BAA-621 / DSM 15236 / T118) (Rhodoferax ferrireducens).